A 113-amino-acid chain; its full sequence is UPF0102 protein Ccon26_01140 (113 aa).

It belongs to the UPF0102 family.

The sequence is that of UPF0102 protein Ccon26_01140 from Campylobacter concisus (strain 13826).